The following is a 171-amino-acid chain: MNKANSFNKEELIACGHGKLFGPNSPRLPVDNMLMMDRIVTINDNGGEFGKGEIVAELDINPDLWFFDCHFITDPVMPGCLGLDAMWQLVGFYLGWEGAEGKGRALGVGEVKFTGQVLPGAKKVTYKLNIKRTIHRKLVMGIADAILEVDGRQIYSATDLKVGVFSDTSTF.

The active site involves His70.

Belongs to the thioester dehydratase family. FabA subfamily. In terms of assembly, homodimer.

Its subcellular location is the cytoplasm. The enzyme catalyses a (3R)-hydroxyacyl-[ACP] = a (2E)-enoyl-[ACP] + H2O. The catalysed reaction is (3R)-hydroxydecanoyl-[ACP] = (2E)-decenoyl-[ACP] + H2O. It carries out the reaction (2E)-decenoyl-[ACP] = (3Z)-decenoyl-[ACP]. It participates in lipid metabolism; fatty acid biosynthesis. Necessary for the introduction of cis unsaturation into fatty acids. Catalyzes the dehydration of (3R)-3-hydroxydecanoyl-ACP to E-(2)-decenoyl-ACP and then its isomerization to Z-(3)-decenoyl-ACP. Can catalyze the dehydratase reaction for beta-hydroxyacyl-ACPs with saturated chain lengths up to 16:0, being most active on intermediate chain length. The sequence is that of 3-hydroxydecanoyl-[acyl-carrier-protein] dehydratase from Shewanella baltica (strain OS223).